The chain runs to 1049 residues: MREAAERRQQLELEHEQALAILNAKQQEIQLLQQSKVRELEEKCRVQSEQFNLLSRDLEKFRQHAGSIDLLGSNSVALLDVPLAPGKPFSQYMNGLATSIHKGHEGPTGHYSVIGDYIPLSGDKLESPCVKPSFLLRSSSPRCRFESEMDDDRSSNKSKHSSSGKVHLCVARYSYNPFDGPNENPEAELPLTAGKYLYVYGDMDEDGFYEGELLDGQRGLVPSNFVDFIQDNESRFAGTLGSEQDQNFLNHSGISLERDSILHLHSPTQVDSGITDNGGGTLDVNIDDIGEDIVPYPRKITLIKQLAKSVIVGWEPPAVPPGWGTVSSYNVLVDKETRMSLALGRRTKALIEKLNTAACTYRISVQCVTSRGNSDELQCTLLVGKDVVVAPSQLRVDNITQISAQLSWLPTNSNYSHIIFLNEEELDIVKAARYKYQFFNLRPNMAYKVKVLAQPHQMPWQLPLEQREKDEACVEFSTLPAGPPAPPQDVTVQAGATTASVQVSWKPPALTPTGLSNGANVTGYGVYAKGQRVAEVIAPTANGAAVELVRLRSLEAKAVSVRTLSAQGESMDSALAAIPPDLLVPPAPHPRTAPPPKPLTSDMDTKDLGPHVKVDESWEQSRPPGPAHGHMLEPPDMHSTGPGRRSPSPSRILPQPQGAPVSTTVAKAMAREAAQRVAETSKLEKRSLFLEQSSAGPYANSDEEDGYASPEVKRRGTSVDDFLKGSELGQQPHCCHGDEYHTESSRGSDLSDIMEEDEEELYSEMQLEDGGRRRPSGTSHNALKILGNSALMGRGDRMEHVSRRYSHSGGGPQRHRPMAPSIDEYTGRDHLSPDFYDESETDPGAEELPARIFVALFDYDPLTMSPNPDAAEEELPFKEGQIIKVYGDKDADGFYRGETCARLGLIPCNMVSEIHADDEEMMDQLLRQGFLPLNTPVEKIERSRRSGRGHSVPTRRMVALYDYDPRESSPNVDVEAELLFCTGDIITVFGEIDEDGFYYGELNGQKGLVPSNFLEEVPDDVEVHLSDAPPHYSHDPPMRTKAKRVSQPP.

The region spanning 164-231 (GKVHLCVARY…PSNFVDFIQD (68 aa)) is the SH3 1 domain. Fibronectin type-III domains lie at 294–387 (VPYP…GKDV), 390–471 (APSQ…EKDE), and 486–587 (PPQD…VPPA). 3 disordered regions span residues 580 to 664 (PDLL…VSTT), 694 to 714 (SAGPYANSDEEDGYASPEVKR), and 728 to 750 (LGQQPHCCHGDEYHTESSRGSDL). Positions 582 to 598 (LLVPPAPHPRTAPPPKP) are enriched in pro residues. Basic and acidic residues predominate over residues 603–616 (MDTKDLGPHVKVDE). A compositionally biased stretch (low complexity) spans 641–651 (GPGRRSPSPSR). S701 and S709 each carry phosphoserine. A compositionally biased stretch (basic and acidic residues) spans 735 to 746 (CHGDEYHTESSR). Phosphoserine is present on residues S832 and S839. T841 carries the phosphothreonine modification. SH3 domains are found at residues 848-916 (LPAR…EIHA) and 952-1019 (VPTR…EVPD). Residues 1024–1049 (HLSDAPPHYSHDPPMRTKAKRVSQPP) form a disordered region. Positions 1040–1049 (TKAKRVSQPP) are enriched in basic residues.

This sequence belongs to the RIMBP family. As to quaternary structure, interacts with CACNA1D and CACNA1B, and potentially with other Ca(2+) channel alpha-1 isoforms. Interacts with RIMS1 and RIMS2.

The protein localises to the cell membrane. It is found in the synapse. Functionally, plays a role in the synaptic transmission as bifunctional linker that interacts simultaneously with RIMS1, RIMS2, CACNA1D and CACNA1B. The sequence is that of RIMS-binding protein 2 (Rimbp2) from Rattus norvegicus (Rat).